The primary structure comprises 236 residues: Lipoarabinomannan carrier protein LprG (236 aa).

An N-terminal signal peptide occupies residues 1-26 (MRTPRRHCRRIAVLAAVSIAATVVAG). Cysteine 27 is lipidated: N-palmitoyl cysteine. Cysteine 27 carries S-diacylglycerol cysteine lipidation.

The protein belongs to the LppX/LprAFG lipoprotein family. Modified by Lgt on Cys-27 with an S-linked diacylglyceral, signal peptide is removed by LspA, Cys-27 is further modifed with a fatty acid on its amino group by Lnt yielding a triacylated protein.

The protein resides in the cell inner membrane. The protein localises to the secreted. It localises to the cell wall. In terms of biological role, helps membrane protein Mb1445c (P55) transport triacylglycerides (TAG) across the inner cell membrane into the periplasm and probably ultimately to the outer membrane. Binds TAG in its hydrophobic cavity and transfers it between lipid bilayers. TAG probably regulates lipid metabolism and growth regulation and plays a structural role in the outer membrane. Binds di- and triacylated phosphatidyl-myo-inositol mannosides (PIMs), and glycolipid lipoglycan modulins lipoarabinomannan (LAM) and lipomannan (LM), facilitating their recognition by TLR2. Required for activity of drug efflux transporter Mb1445c. Required, probably with Mb1445c, for normal surface localization of LAM. Constitutes a host TLR2 agonist (toll-like receptor). The chain is Lipoarabinomannan carrier protein LprG from Mycobacterium bovis (strain ATCC BAA-935 / AF2122/97).